Reading from the N-terminus, the 580-residue chain is NADH-quinone oxidoreductase subunit C/D (580 aa).

The segment at 1 to 171 (MSLDQAIPEA…PPFVLTDRLF (171 aa)) is NADH dehydrogenase I subunit C. The interval 195 to 580 (ELMVLNFGPH…IDFVMSDVDR (386 aa)) is NADH dehydrogenase I subunit D.

This sequence in the N-terminal section; belongs to the complex I 30 kDa subunit family. The protein in the C-terminal section; belongs to the complex I 49 kDa subunit family. NDH-1 is composed of 13 different subunits. Subunits NuoB, CD, E, F, and G constitute the peripheral sector of the complex.

It is found in the cell inner membrane. It carries out the reaction a quinone + NADH + 5 H(+)(in) = a quinol + NAD(+) + 4 H(+)(out). In terms of biological role, NDH-1 shuttles electrons from NADH, via FMN and iron-sulfur (Fe-S) centers, to quinones in the respiratory chain. The immediate electron acceptor for the enzyme in this species is believed to be ubiquinone. Couples the redox reaction to proton translocation (for every two electrons transferred, four hydrogen ions are translocated across the cytoplasmic membrane), and thus conserves the redox energy in a proton gradient. This is NADH-quinone oxidoreductase subunit C/D from Cereibacter sphaeroides (strain ATCC 17029 / ATH 2.4.9) (Rhodobacter sphaeroides).